The chain runs to 90 residues: Probable Fe(2+)-trafficking protein (90 aa).

The protein belongs to the Fe(2+)-trafficking protein family. Monomer.

Functionally, could be a mediator in iron transactions between iron acquisition and iron-requiring processes, such as synthesis and/or repair of Fe-S clusters in biosynthetic enzymes. The chain is Probable Fe(2+)-trafficking protein from Yersinia enterocolitica serotype O:8 / biotype 1B (strain NCTC 13174 / 8081).